The primary structure comprises 456 residues: Bacteriochlorophyllide d C-12(1)-methyltransferase (456 aa).

The 228-residue stretch at 178 to 405 (HAKKYSQLIP…MFEPKKLGGE (228 aa)) folds into the Radical SAM core domain. [4Fe-4S] cluster is bound by residues Cys194, Cys198, and Cys201.

This sequence belongs to the radical SAM superfamily. The cofactor is [4Fe-4S] cluster.

It is found in the cytoplasm. The enzyme catalyses 8-ethyl-12-methyl-3-vinylbacteriochlorophyllide d + S-adenosyl-L-methionine = 8,12-diethyl-3-vinylbacteriochlorophyllide d + S-adenosyl-L-homocysteine + H(+). The protein operates within porphyrin-containing compound metabolism; bacteriochlorophyll biosynthesis (light-independent). Its function is as follows. Involved in the biosynthesis of the major light-harvesting pigment bacteriochlorophyll c (BChlc), which confers a significant competitive advantage to green sulfur bacteria living at limiting red and near-infrared light intensities. BchR is a methyltransferase that adds a single methyl group to the methyl carbon at the C-12(1) position of 8-ethyl-12-methyl-3-vinylbacteriochlorophyllide d to yield 8,12-diethyl-3-vinylbacteriochlorophyllide d. This is Bacteriochlorophyllide d C-12(1)-methyltransferase from Chlorobaculum tepidum (strain ATCC 49652 / DSM 12025 / NBRC 103806 / TLS) (Chlorobium tepidum).